The sequence spans 315 residues: G-box-binding factor 1 (315 aa).

Disordered regions lie at residues 1 to 56 (MGTS…GSPS) and 93 to 268 (MPMP…RDEL). Residues 46–56 (PFFPSPVGSPS) show a composition bias toward pro residues. Composition is skewed to polar residues over residues 133-164 (GSGN…QEQG) and 178-187 (ASSQSTTGEI). The region spanning 222-285 (ELKRQKRKQS…DKLKSENNSI (64 aa)) is the bZIP domain. The tract at residues 224-243 (KRQKRKQSNRESARRSRLRK) is basic motif. A compositionally biased stretch (polar residues) spans 249–262 (QLQQRVESLSNENQ). The leucine-zipper stretch occupies residues 250–285 (LQQRVESLSNENQSLRDELQRLSSECDKLKSENNSI).

This sequence belongs to the bZIP family. In terms of assembly, monomer and heterodimers with BZIP16 and BZIP68. Interacts with GIP1. Post-translationally, phosphorylated by CK2. As to expression, found in both light and dark grown leaves.

It localises to the nucleus. In terms of biological role, binds to the G-box motif (5'-CCACGTGG-3') of the rbcS-1A gene promoter. G-box and G-box-like motifs are cis-acting elements defined in promoters of certain plant genes which are regulated by such diverse stimuli as light-induction or hormone control. Binds to the G-box motif 5'-CACGTG-3' of LHCB2.4 (At3g27690) promoter. May act as transcriptional activator in light-regulated expression of LHCB2.4. Probably binds DNA as monomer. DNA-binding activity is redox-dependent. This is G-box-binding factor 1 (GBF1) from Arabidopsis thaliana (Mouse-ear cress).